The following is a 428-amino-acid chain: GTPase Obg (428 aa).

Positions 1-158 (MFVDQVKIYV…RYIVLELKVL (158 aa)) constitute an Obg domain. Positions 118–143 (KGGRGGRGNTRFATPANPAPQLSENG) are disordered. Residues 159-329 (ADVGLVGFPS…LLFEIADRLE (171 aa)) enclose the OBG-type G domain. Residues 165–172 (GFPSVGKS), 190–194 (FTTLN), 212–215 (DLPG), 282–285 (NKMD), and 310–312 (SAV) each bind GTP. Residues serine 172 and threonine 192 each coordinate Mg(2+). The region spanning 350-428 (KLEDEEAPFE…LLEFEFEFID (79 aa)) is the OCT domain.

Belongs to the TRAFAC class OBG-HflX-like GTPase superfamily. OBG GTPase family. In terms of assembly, monomer. The cofactor is Mg(2+).

It is found in the cytoplasm. Functionally, an essential GTPase which binds GTP, GDP and possibly (p)ppGpp with moderate affinity, with high nucleotide exchange rates and a fairly low GTP hydrolysis rate. Plays a role in control of the cell cycle, stress response, ribosome biogenesis and in those bacteria that undergo differentiation, in morphogenesis control. This Bacillus licheniformis (strain ATCC 14580 / DSM 13 / JCM 2505 / CCUG 7422 / NBRC 12200 / NCIMB 9375 / NCTC 10341 / NRRL NRS-1264 / Gibson 46) protein is GTPase Obg.